The following is a 289-amino-acid chain: Iodotyrosine deiodinase 1 (289 aa).

A helical membrane pass occupies residues 1 to 21 (MFLLTPVLVAVVCILMVWIFK). FMN contacts are provided by residues 100–104 (RRSVR) and 128–129 (SG). The 3,5-diiodo-L-tyrosine site is built by alanine 130, glutamate 157, tyrosine 161, and lysine 182. Alanine 130, glutamate 157, tyrosine 161, and lysine 182 together coordinate 3-iodo-L-tyrosine. Residues 237 to 239 (TTT) and arginine 279 each bind FMN.

It belongs to the nitroreductase family. In terms of assembly, homodimer. Requires FMN as cofactor. As to expression, detected in thyroid (at protein level).

It localises to the cell membrane. It is found in the cytoplasmic vesicle membrane. It carries out the reaction 2 iodide + L-tyrosine + 2 NADP(+) = 3,5-diiodo-L-tyrosine + 2 NADPH + H(+). The catalysed reaction is iodide + L-tyrosine + NADP(+) = 3-iodo-L-tyrosine + NADPH. The enzyme catalyses 3-iodo-L-tyrosine + iodide + NADP(+) = 3,5-diiodo-L-tyrosine + NADPH + H(+). It catalyses the reaction L-tyrosine + chloride + NADP(+) = 3-chloro-L-tyrosine + NADPH. It carries out the reaction bromide + L-tyrosine + NADP(+) = 3-bromo-L-tyrosine + NADPH. Catalyzes the dehalogenation of halotyrosines such as 3-bromo-L-tyrosine, 3-chloro-L-tyrosine, 3-iodo-L-tyrosine and 3,5-diiodo-L-tyrosine. During thyroid hormone biosynthesis, facilitates iodide salvage by catalysing the oxidative NADPH-dependent deiodination of the halogenated by-products of thyroid hormone production, monoiodotyrosine (L-MIT) and diiodotyrosine (L-DIT). The scavanged iodide can then reenter the hormone-producing pathways. Acts more efficiently on 3-iodo-L-tyrosine than 3,5-diiodo-L-tyrosine. In Sus scrofa (Pig), this protein is Iodotyrosine deiodinase 1 (IYD).